The sequence spans 535 residues: Thermosome subunit gamma (535 aa).

Belongs to the TCP-1 chaperonin family. Forms a heterooligomeric complex of two stacked nine-membered rings; one of alpha and the other of beta subunits.

It is found in the cytoplasm. The enzyme catalyses ATP + H2O = ADP + phosphate + H(+). Functionally, molecular chaperone; binds unfolded polypeptides in vitro, and has a weak ATPase activity. The protein is Thermosome subunit gamma (thsC) of Saccharolobus shibatae (strain ATCC 51178 / DSM 5389 / JCM 8931 / NBRC 15437 / B12) (Sulfolobus shibatae).